Consider the following 1249-residue polypeptide: LRR receptor-like serine/threonine-protein kinase GSO1 (1249 aa).

A signal peptide spans Met1 to Gly18. Residues Gln19 to Val876 lie on the Extracellular side of the membrane. Residues Asn77 and Asn117 are each glycosylated (N-linked (GlcNAc...) asparagine). LRR repeat units follow at residues Phe94–Leu118, Thr119–Leu142, Asn144–Leu166, Asn168–Leu190, Val191–Cys214, Asp216–Leu238, Glu239–Met262, Gln264–Asp285, Leu286–Met310, Gln312–Asn334, Thr336–Cys359, Gln360–Leu383, Glu385–Leu407, Thr408–Leu431, Lys433–Cys455, Ser457–Leu479, Lys480–Cys503, Gln505–Leu527, Lys528–Leu551, Asn553–Ser574, Ser576–Ser598, Gln599–Ile622, Arg623–Cys646, Lys648–Leu670, Ser671–Cys694, Lys696–Leu718, Gly719–Leu742, Lys744–Leu766, Gln767–Leu791, Ser792–Met815, and Ser817–Arg838. N-linked (GlcNAc...) asparagine glycosylation is found at Asn213, Asn228, and Asn248. Residues Asn298, Asn309, and Asn334 are each glycosylated (N-linked (GlcNAc...) asparagine). N-linked (GlcNAc...) asparagine glycans are attached at residues Asn369, Asn393, and Asn406. The N-linked (GlcNAc...) asparagine glycan is linked to Asn454. 4 N-linked (GlcNAc...) asparagine glycosylation sites follow: Asn537, Asn553, Asn558, and Asn565. Asn693 and Asn708 each carry an N-linked (GlcNAc...) asparagine glycan. An N-linked (GlcNAc...) asparagine glycan is attached at Asn779. Asn822 is a glycosylation site (N-linked (GlcNAc...) asparagine). A helical transmembrane segment spans residues Ile877 to Phe897. Residues Phe898–Leu1249 are Cytoplasmic-facing. Thr948 is subject to Phosphothreonine. The Protein kinase domain occupies Leu951–Asn1240. ATP contacts are provided by residues Ile957 to Val965 and Lys979. Phosphotyrosine is present on residues Tyr1027 and Tyr1071. Asp1084 acts as the Proton acceptor in catalysis. A phosphotyrosine mark is found at Tyr1129 and Tyr1136.

Belongs to the protein kinase superfamily. Ser/Thr protein kinase family. In terms of assembly, interacts with CIF1 and CIF2. In terms of tissue distribution, mostly expressed in siliques, seeds, developing embryos and seedlings, detected in flower buds and roots, but not in leaves or stems.

Its subcellular location is the cell membrane. It carries out the reaction L-seryl-[protein] + ATP = O-phospho-L-seryl-[protein] + ADP + H(+). The enzyme catalyses L-threonyl-[protein] + ATP = O-phospho-L-threonyl-[protein] + ADP + H(+). Together with GSO2, receptor-like serine/threonine-kinase required during the development of the epidermal surface in embryos and cotyledons. In coordination with GSO2, regulates root growth through control of cell division and cell fate specification. Controls seedling root growth by modulating sucrose response after germination. Receptor of the peptide hormones CIF1 and CIF2 required for contiguous Casparian strip diffusion barrier formation in roots. Required for localizing CASP proteins into the Casparian strip following an uninterrupted, ring-like domain, to trigger endodermal differentiation and thus regulate potassium ion (K) homeostasis. Involved in the maintenance of water transport and root pressure. May also be involved in the regulation of suberin accumulation in the endodermis. The polypeptide is LRR receptor-like serine/threonine-protein kinase GSO1 (Arabidopsis thaliana (Mouse-ear cress)).